The sequence spans 432 residues: Enolase (432 aa).

Position 167 (Gln-167) interacts with (2R)-2-phosphoglycerate. Glu-209 acts as the Proton donor in catalysis. Mg(2+) contacts are provided by Asp-246, Glu-287, and Asp-314. Residues Lys-339, Arg-368, Ser-369, and Lys-390 each coordinate (2R)-2-phosphoglycerate. Lys-339 (proton acceptor) is an active-site residue.

This sequence belongs to the enolase family. The cofactor is Mg(2+).

The protein localises to the cytoplasm. Its subcellular location is the secreted. It is found in the cell surface. The enzyme catalyses (2R)-2-phosphoglycerate = phosphoenolpyruvate + H2O. It functions in the pathway carbohydrate degradation; glycolysis; pyruvate from D-glyceraldehyde 3-phosphate: step 4/5. In terms of biological role, catalyzes the reversible conversion of 2-phosphoglycerate (2-PG) into phosphoenolpyruvate (PEP). It is essential for the degradation of carbohydrates via glycolysis. This is Enolase from Prochlorococcus marinus (strain MIT 9211).